Consider the following 306-residue polypeptide: tRNA pseudouridine synthase B (306 aa).

D38 acts as the Nucleophile in catalysis.

The protein belongs to the pseudouridine synthase TruB family. Type 1 subfamily.

It carries out the reaction uridine(55) in tRNA = pseudouridine(55) in tRNA. Its function is as follows. Responsible for synthesis of pseudouridine from uracil-55 in the psi GC loop of transfer RNAs. This is tRNA pseudouridine synthase B from Syntrophotalea carbinolica (strain DSM 2380 / NBRC 103641 / GraBd1) (Pelobacter carbinolicus).